A 334-amino-acid chain; its full sequence is Mediator of RNA polymerase II transcription subunit 4 (334 aa).

Residues 71–100 (QEREQLIRTLEAHVEKRDEVIQQLETNLKS) adopt a coiled-coil conformation. Residues 193–334 (PLITSPSASS…ASKKTGSSNK (142 aa)) are disordered. 2 stretches are compositionally biased toward polar residues: residues 194-206 (LITSPSASSSNGG) and 251-282 (NEKQWQNPGVSGATSTQSPYNRVSQSPSSSPN).

The protein belongs to the Mediator complex subunit 4 family. Component of the Mediator complex.

It is found in the nucleus. In terms of biological role, component of the Mediator complex, a coactivator involved in the regulated transcription of nearly all RNA polymerase II-dependent genes. Mediator functions as a bridge to convey information from gene-specific regulatory proteins to the basal RNA polymerase II transcription machinery. Mediator is recruited to promoters by direct interactions with regulatory proteins and serves as a scaffold for the assembly of a functional preinitiation complex with RNA polymerase II and the general transcription factors. The sequence is that of Mediator of RNA polymerase II transcription subunit 4 (mdt-4) from Caenorhabditis elegans.